A 284-amino-acid chain; its full sequence is 4-hydroxybenzoate octaprenyltransferase (284 aa).

Transmembrane regions (helical) follow at residues 14-34, 41-61, 93-113, 134-154, 166-186, 209-229, 233-253, and 262-282; these read VHQPVGFFLLLWPTLWALWIT, FIVLSLFIVGVMCMRSAGCVI, WVFFILILIALIVVCVFNNII, YIYLPQLVLGIIFSWSILIVY, WLLFLANTIWVVLYDTEYAMV, IVIGILQLLTVFILYIIGIVE, IIFYLFSIVGASILFIWQQVL, and CLWAFLSNSYVGMLIFVGIVL.

This sequence belongs to the UbiA prenyltransferase family. The cofactor is Mg(2+).

The protein localises to the cell inner membrane. The catalysed reaction is all-trans-octaprenyl diphosphate + 4-hydroxybenzoate = 4-hydroxy-3-(all-trans-octaprenyl)benzoate + diphosphate. It functions in the pathway cofactor biosynthesis; ubiquinone biosynthesis. Catalyzes the prenylation of para-hydroxybenzoate (PHB) with an all-trans polyprenyl group. Mediates the second step in the final reaction sequence of ubiquinone-8 (UQ-8) biosynthesis, which is the condensation of the polyisoprenoid side chain with PHB, generating the first membrane-bound Q intermediate 3-octaprenyl-4-hydroxybenzoate. The sequence is that of 4-hydroxybenzoate octaprenyltransferase from Blochmanniella floridana.